Here is a 142-residue protein sequence, read N- to C-terminus: Large ribosomal subunit protein bL17 (142 aa).

The protein belongs to the bacterial ribosomal protein bL17 family. In terms of assembly, part of the 50S ribosomal subunit. Contacts protein L32.

This chain is Large ribosomal subunit protein bL17, found in Wolbachia pipientis subsp. Culex pipiens (strain wPip).